The chain runs to 37 residues: Photosystem II reaction center protein M (37 aa).

The helical transmembrane segment at 7–27 (AFIAVLLFLAVPTAFLLIPYV) threads the bilayer.

This sequence belongs to the PsbM family. PSII is composed of 1 copy each of membrane proteins PsbA, PsbB, PsbC, PsbD, PsbE, PsbF, PsbH, PsbI, PsbJ, PsbK, PsbL, PsbM, PsbT, PsbX, PsbY, PsbZ, Psb30/Ycf12, at least 3 peripheral proteins of the oxygen-evolving complex and a large number of cofactors. It forms dimeric complexes.

It is found in the plastid. The protein localises to the chloroplast thylakoid membrane. One of the components of the core complex of photosystem II (PSII). PSII is a light-driven water:plastoquinone oxidoreductase that uses light energy to abstract electrons from H(2)O, generating O(2) and a proton gradient subsequently used for ATP formation. It consists of a core antenna complex that captures photons, and an electron transfer chain that converts photonic excitation into a charge separation. This subunit is found at the monomer-monomer interface. The sequence is that of Photosystem II reaction center protein M from Pinus thunbergii (Japanese black pine).